A 290-amino-acid polypeptide reads, in one-letter code: 4-diphosphocytidyl-2-C-methyl-D-erythritol kinase (290 aa).

Lys-13 is an active-site residue. 93-103 (PVQAGLGGGSA) is an ATP binding site. Asp-135 is a catalytic residue.

Belongs to the GHMP kinase family. IspE subfamily.

The enzyme catalyses 4-CDP-2-C-methyl-D-erythritol + ATP = 4-CDP-2-C-methyl-D-erythritol 2-phosphate + ADP + H(+). It functions in the pathway isoprenoid biosynthesis; isopentenyl diphosphate biosynthesis via DXP pathway; isopentenyl diphosphate from 1-deoxy-D-xylulose 5-phosphate: step 3/6. Functionally, catalyzes the phosphorylation of the position 2 hydroxy group of 4-diphosphocytidyl-2C-methyl-D-erythritol. This Desulfitobacterium hafniense (strain Y51) protein is 4-diphosphocytidyl-2-C-methyl-D-erythritol kinase.